Reading from the N-terminus, the 130-residue chain is Protachykinin-1 (130 aa).

The N-terminal stretch at Met1 to Ala19 is a signal peptide. The propeptide occupies Glu20 to Ala56. Met68 and Met107 each carry methionine amide.

Belongs to the tachykinin family. The substance P form is cleaved at Pro-59 by the prolyl endopeptidase FAP (seprase) activity (in vitro). Substance P is also cleaved and degraded by Angiotensin-converting enzyme (ACE) and neprilysin (MME).

It is found in the secreted. Functionally, tachykinins are active peptides which excite neurons, evoke behavioral responses, are potent vasodilators and secretagogues, and contract (directly or indirectly) many smooth muscles. The sequence is that of Protachykinin-1 (TAC1) from Mesocricetus auratus (Golden hamster).